The sequence spans 247 residues: Triosephosphate isomerase (247 aa).

Substrate contacts are provided by Asn-10 and Lys-12. The active-site Electrophile is the His-94. Glu-164 acts as the Proton acceptor in catalysis.

Belongs to the triosephosphate isomerase family. Homodimer.

It carries out the reaction D-glyceraldehyde 3-phosphate = dihydroxyacetone phosphate. It participates in carbohydrate biosynthesis; gluconeogenesis. It functions in the pathway carbohydrate degradation; glycolysis; D-glyceraldehyde 3-phosphate from glycerone phosphate: step 1/1. The chain is Triosephosphate isomerase (Tpi) from Drosophila melanogaster (Fruit fly).